The sequence spans 574 residues: Methionine--tRNA ligase (574 aa).

Positions 11–21 (PYINGIKHLGN) match the 'HIGH' region motif. Zn(2+) is bound by residues Cys143, Cys146, Cys156, and Cys159. A 'KMSKS' region motif is present at residues 345–349 (KFSTS). Thr348 is an ATP binding site.

The protein belongs to the class-I aminoacyl-tRNA synthetase family. MetG type 1 subfamily. In terms of assembly, monomer. Zn(2+) serves as cofactor.

Its subcellular location is the cytoplasm. The catalysed reaction is tRNA(Met) + L-methionine + ATP = L-methionyl-tRNA(Met) + AMP + diphosphate. Functionally, is required not only for elongation of protein synthesis but also for the initiation of all mRNA translation through initiator tRNA(fMet) aminoacylation. The polypeptide is Methionine--tRNA ligase (Streptomyces avermitilis (strain ATCC 31267 / DSM 46492 / JCM 5070 / NBRC 14893 / NCIMB 12804 / NRRL 8165 / MA-4680)).